Consider the following 234-residue polypeptide: UPF0104 membrane protein MJ1078 (234 aa).

A run of 5 helical transmembrane segments spans residues 32-52 (VGTV…LLFI), 70-90 (IKWG…FLIV), 123-143 (LITL…FIFL), 164-184 (LTAI…LIYI), and 198-218 (VLIL…AIMF).

It belongs to the UPF0104 family.

The protein localises to the cell membrane. The chain is UPF0104 membrane protein MJ1078 from Methanocaldococcus jannaschii (strain ATCC 43067 / DSM 2661 / JAL-1 / JCM 10045 / NBRC 100440) (Methanococcus jannaschii).